A 131-amino-acid polypeptide reads, in one-letter code: Putative pre-16S rRNA nuclease (131 aa).

Belongs to the YqgF nuclease family.

It is found in the cytoplasm. Functionally, could be a nuclease involved in processing of the 5'-end of pre-16S rRNA. The polypeptide is Putative pre-16S rRNA nuclease (Bordetella avium (strain 197N)).